Here is a 455-residue protein sequence, read N- to C-terminus: MEFSEWYSDILEKAEIYDVRYPIKGCGVYLPYGFKIRRYTFEIIRNLLDESGHDEALFPMLIPEDLLAKEAEHIKGFEDEVYWVTHGGKTQLDVKLALRPTSETPIYYMMKLWVKVHTDLPIKIYQIVNTFRYETKHTRPLIRLREIMTFKEAHTAHSTKEEAENQVKEAISIYKKFFDTLGIPYLISKRPEWDKFPGAEYTMAFDTIFPDGRTMQIATVHNLGQNFSKTFEIIFETPTGDKDYAYQTCYGISDRVIASIIAIHGDEKGLILPPIVAPIQVVIVPLIFKGKEDIVMEKAKEIYEKLKGKFRVHIDDRDIRPGRKFNDWEIKGVPLRIEVGPKDIENKKITLFRRDTMEKFQVDETQLMEVVEKTLNNIMENIKNRAWEKFENFITILEDINPDEIKNILSEKRGVILVPFKEEIYNEELEEKVEATILGETEYKGNKYIAIAKTY.

L-proline is bound by residues Thr101, Glu103, and Arg132. The ATP site is built by Arg132, Glu134, Gln216, and Thr219. Position 221 (His221) interacts with L-proline. Residues Ser253 and Arg255 each coordinate ATP. An interaction with tRNA region spans residues 329 to 359; the sequence is EIKGVPLRIEVGPKDIENKKITLFRRDTMEK.

This sequence belongs to the class-II aminoacyl-tRNA synthetase family. ProS type 3 subfamily. In terms of assembly, homodimer. The dimer is functionally asymmetric: only one of the two active sites at a time is able to form prolyl-adenylate, and only one tRNA molecule binds per dimer.

It is found in the cytoplasm. The catalysed reaction is tRNA(Pro) + L-proline + ATP = L-prolyl-tRNA(Pro) + AMP + diphosphate. Inhibited by high concentrations of prolinamide. In terms of biological role, catalyzes the attachment of proline to tRNA(Pro) in a two-step reaction: proline is first activated by ATP to form Pro-AMP and then transferred to the acceptor end of tRNA(Pro). Can inadvertently accommodate and process non-cognate amino acids such as cysteine and alanine. The sequence is that of Proline--tRNA ligase (proS) from Methanocaldococcus jannaschii (strain ATCC 43067 / DSM 2661 / JAL-1 / JCM 10045 / NBRC 100440) (Methanococcus jannaschii).